Consider the following 276-residue polypeptide: Diaminopimelate epimerase (276 aa).

The substrate site is built by N13, Q46, and N66. Residue C75 is the Proton donor of the active site. Substrate-binding positions include 76 to 77 (GN), N159, N192, and 210 to 211 (ER). Catalysis depends on C219, which acts as the Proton acceptor. 220 to 221 (GT) is a binding site for substrate.

The protein belongs to the diaminopimelate epimerase family. Homodimer.

It is found in the cytoplasm. It carries out the reaction (2S,6S)-2,6-diaminopimelate = meso-2,6-diaminopimelate. It functions in the pathway amino-acid biosynthesis; L-lysine biosynthesis via DAP pathway; DL-2,6-diaminopimelate from LL-2,6-diaminopimelate: step 1/1. In terms of biological role, catalyzes the stereoinversion of LL-2,6-diaminopimelate (L,L-DAP) to meso-diaminopimelate (meso-DAP), a precursor of L-lysine and an essential component of the bacterial peptidoglycan. The protein is Diaminopimelate epimerase of Ectopseudomonas mendocina (strain ymp) (Pseudomonas mendocina).